The primary structure comprises 96 residues: Putative membrane protein insertion efficiency factor (96 aa).

Belongs to the UPF0161 family.

The protein resides in the cell inner membrane. In terms of biological role, could be involved in insertion of integral membrane proteins into the membrane. This chain is Putative membrane protein insertion efficiency factor, found in Borreliella afzelii (strain PKo) (Borrelia afzelii).